A 312-amino-acid polypeptide reads, in one-letter code: MNILTDPAKLKTAGCADTNASKCSEGDGEGSVQVQLDPNLKIGTAKVFSIYGKGGIGKSTTSSNLSVAFSKLGKRVLQIGCDPKHDSTFTLTKRLVPTVIDVLESVNFHSEELRPEDFVFEGYNGVMCLEAGGPPAGTGCGGYVVGQTVKLLKEHHLLEDTDVVIFDVLGDVVCGGFAAPLQHSERAMIVAANDFDSIFAANRIAAAIAAKSKNYGVRLGGIIANRSRETDQIDKFGERTGIRRIAHLPDLDVIRKSRLKKMTLFEMDHTDEILAVQQEYLRLATEMLEGKEPPIDGKPLKDRDIFDLLGFD.

Residues 55–60 and Lys84 contribute to the ATP site; that span reads GIGKST. Ser59 is a Mg(2+) binding site. The [4Fe-4S] cluster site is built by Cys140 and Cys174. ATP is bound by residues 225–226 and 249–251; these read NR and PDL.

The protein belongs to the NifH/BchL/ChlL family. In terms of assembly, homodimer. Protochlorophyllide reductase is composed of three subunits; BchL, BchN and BchB. It depends on [4Fe-4S] cluster as a cofactor.

The enzyme catalyses chlorophyllide a + oxidized 2[4Fe-4S]-[ferredoxin] + 2 ADP + 2 phosphate = protochlorophyllide a + reduced 2[4Fe-4S]-[ferredoxin] + 2 ATP + 2 H2O. It functions in the pathway porphyrin-containing compound metabolism; bacteriochlorophyll biosynthesis (light-independent). Its function is as follows. Component of the dark-operative protochlorophyllide reductase (DPOR) that uses Mg-ATP and reduced ferredoxin to reduce ring D of protochlorophyllide (Pchlide) to form chlorophyllide a (Chlide). This reaction is light-independent. The L component serves as a unique electron donor to the NB-component of the complex, and binds Mg-ATP. The sequence is that of Light-independent protochlorophyllide reductase iron-sulfur ATP-binding protein from Rhodopseudomonas palustris (strain BisB18).